A 353-amino-acid chain; its full sequence is tRNA-specific 2-thiouridylase MnmA (353 aa).

Residues 6-13 (GMSGGVDS) and L32 each bind ATP. C99 acts as the Nucleophile in catalysis. C99 and C197 are disulfide-bonded. G124 serves as a coordination point for ATP. Residues 147–149 (KDQ) form an interaction with tRNA region. C197 functions as the Cysteine persulfide intermediate in the catalytic mechanism. Residues 303–304 (RY) form an interaction with tRNA region.

It belongs to the MnmA/TRMU family.

The protein localises to the cytoplasm. The catalysed reaction is S-sulfanyl-L-cysteinyl-[protein] + uridine(34) in tRNA + AH2 + ATP = 2-thiouridine(34) in tRNA + L-cysteinyl-[protein] + A + AMP + diphosphate + H(+). Functionally, catalyzes the 2-thiolation of uridine at the wobble position (U34) of tRNA, leading to the formation of s(2)U34. The protein is tRNA-specific 2-thiouridylase MnmA of Persephonella marina (strain DSM 14350 / EX-H1).